Here is a 146-residue protein sequence, read N- to C-terminus: Suppressor APC domain-containing protein 1 (146 aa).

Residues 121–146 (HRKGVTQSTGEVVSQAPPGPKGPTLV) are disordered. Positions 137 to 146 (PPGPKGPTLV) are enriched in pro residues.

This chain is Suppressor APC domain-containing protein 1 (Sapcd1), found in Mus musculus (Mouse).